Here is a 38-residue protein sequence, read N- to C-terminus: Plastocyanin (38 aa).

One can recognise a Plastocyanin-like domain in the interval 1-38 (AQTVEVKMGADGGLLVFEPAKAGPHNVVFDEDNIPPGV). His25 provides a ligand contact to Cu cation.

Belongs to the plastocyanin family. Cu(2+) is required as a cofactor.

It localises to the plastid. The protein localises to the chloroplast thylakoid membrane. Participates in electron transfer between P700 and the cytochrome b6-f complex in photosystem I. The polypeptide is Plastocyanin (PETE) (Thalassiosira oceanica (Marine diatom)).